Here is a 935-residue protein sequence, read N- to C-terminus: Myocardin (935 aa).

The MEF2C-binding motif lies at 12 to 27 (IRRKFRSVLQLRLQQR). RPEL repeat units lie at residues 18–43 (SVLQ…PPLK), 62–87 (DSLR…QAST), and 106–131 (DDLN…PMDS). The segment at 37 to 73 (GLIPPLKGPTEFHDPRKQLDSAKTEDSLRRKGRNRSD) is disordered. Basic and acidic residues predominate over residues 46-73 (TEFHDPRKQLDSAKTEDSLRRKGRNRSD). The tract at residues 153–201 (FEDDSSRDGLSPDQARSEDPQGSTGSTPDIKSTEAPLDTIQDLTPGSES) is HDAC5-binding. The tract at residues 155-283 (DDSSRDGLSP…SPPPMDSAYA (129 aa)) is disordered. Polar residues-rich tracts occupy residues 172 to 182 (PQGSTGSTPDI) and 206 to 216 (AASQPGNQSDP). Basic residues predominate over residues 244 to 261 (NRHKKPKDPKPKVKKLKY). Positions 287 to 322 (QQQQLFLQLQILSQQQQQQQQQQQQQQQQQQQQQRF) form a coiled coil. Residues 337-378 (EQMARNPNPSSTPLSNTPLSPVKNSISGQTGVSSLKPGPLPP) are disordered. Over residues 342-357 (NPNPSSTPLSNTPLSP) the composition is skewed to low complexity. Over residues 358-369 (VKNSISGQTGVS) the composition is skewed to polar residues. Residues 380–414 (LDDLKVSELRQQLRIRGLPVSGTKTALVDRLRPFQ) enclose the SAP domain. Phosphoserine; by GSK3-beta occurs at positions 454, 458, 462, and 466. The disordered stretch occupies residues 498 to 518 (ESLLSSLNGGSGPSEPDGLDS). A coiled-coil region spans residues 519–563 (EKDKMLVEKQKVINQLTWKLRQEQRQVEELRMQLQKQKSSCSDQK). Residues 579-605 (SCPFAPQQASGKGQGHSSDSPPPACET) form a disordered region. Polar residues predominate over residues 585–597 (QQASGKGQGHSSD). 4 positions are modified to phosphoserine; by GSK3-beta: Ser-624, Ser-628, Ser-632, and Ser-636. A disordered region spans residues 654 to 731 (NNHYFLASSS…DAVKQQMTRS (78 aa)). The segment covering 660–691 (ASSSGAQRENHGVSSPSSSQGCAQMTGLQSSD) has biased composition (polar residues). Low complexity predominate over residues 695–709 (PTFSIPSPTFSKSSS). Positions 714–935 (ITQPPSYEDA…SPMDLHLQQW (222 aa)) are required for interaction with and ubiquitination by STUB1. A phosphoserine; by MAPK1 and MAPK3 mark is found at Ser-812, Ser-859, and Ser-866. Position 893 is a phosphothreonine; by MAPK1 and MAPK3 (Thr-893).

As to quaternary structure, homodimer. Interacts with MLLT7/FOXO4. Interacts with SRF, its association does not depend on specific DNA sequences for ternary complex formation. Interacts (via C-terminal) with EP300 (via CREB-binding domain). Interacts with HDAC4 and HDAC5. Interacts with MEF2C. Interacts (via C-terminus) with STUB1/CHIP. Interacts with PURB. In terms of processing, ubiquitinated; by STUB1/CHIP at the C-terminus, leading to its degradation by the proteasome. Phosphorylation by GSK3B is required for STUB1/CHIP-mediated ubiquitination. Post-translationally, phosphorylation negatively regulates transcriptional activity. Phosphorylated; by GSK3B. In terms of tissue distribution, expressed in smooth muscle cell-containing tissues. Expressed in the heart. Expressed in the aorta and bladder. Weakly expression in the lung, testis and kidney. Weakly expressed in the stomach. Weakly expressed in the intestine and colon. As to expression, expressed in the heart. Predominantly expressed in cardiac muscle. In terms of tissue distribution, predominantly expressed in smooth muscle cell-rich tissues.

It is found in the nucleus speckle. In terms of biological role, smooth muscle cells (SM) and cardiac muscle cells-specific transcriptional factor which uses the canonical single or multiple CArG boxes DNA sequence. Acts as a cofactor of serum response factor (SRF) with the potential to modulate SRF-target genes. Plays a crucial role in cardiogenesis, urinary bladder development, and differentiation of the smooth muscle cell lineage (myogenesis). Positively regulates the transcription of genes involved in vascular smooth muscle contraction. Its function is as follows. Positively regulates the activation of smooth muscle cell gene promoter regions. Functionally, positively regulates the activation of smooth muscle cell gene promoter regions. Activation of the MYH6 promoter is enhanced in the presence of MEF2C. This Mus musculus (Mouse) protein is Myocardin (Myocd).